An 89-amino-acid polypeptide reads, in one-letter code: Protein S100-A6 (89 aa).

2 EF-hand domains span residues 12-47 (LVAI…IGSK) and 48-83 (LQDA…LALI). Positions 28 and 33 each coordinate Ca(2+). An N6-acetyllysine modification is found at lysine 40. Serine 46 is subject to Phosphoserine. Lysine 47 is subject to N6-acetyllysine; alternate. Lysine 47 bears the N6-succinyllysine; alternate mark. Ca(2+)-binding residues include aspartate 61, asparagine 63, aspartate 65, glutamate 67, and glutamate 72.

Belongs to the S-100 family. In terms of assembly, homodimer; head to tail assembly of 2 subunits. Interacts with CACYBP in a calcium-dependent manner. Interacts with ANXA2 and ANXA11 (via N-terminus). Interacts with SUGT1. Interacts with TP53; has higher affinity for TP53 that is phosphorylated on its N-terminal domain, and lower affinity for TP53 that is phosphorylated on its C-terminal domain. Interacts with tropomyosin. Interacts with FKBP4. Interacts with PPP5C (via TPR repeats); the interaction is calcium-dependent and modulates PPP5C activity. Interacts with TPPP; this interaction inhibits TPPP dimerization.

Its subcellular location is the nucleus envelope. The protein localises to the cytoplasm. It localises to the cell membrane. Functionally, may function as calcium sensor and modulator, contributing to cellular calcium signaling. May function by interacting with other proteins, such as TPR-containing proteins, and indirectly play a role in many physiological processes such as the reorganization of the actin cytoskeleton and in cell motility. Binds 2 calcium ions. Calcium binding is cooperative. This Mus musculus (Mouse) protein is Protein S100-A6 (S100a6).